The chain runs to 180 residues: ADP-ribosylation factor 4 (180 aa).

G2 is lipidated: N-myristoyl glycine. Residues 24-31 (GLDAAGKT), 67-71 (DVGGQ), and 126-129 (NKQD) each bind GTP.

The protein belongs to the small GTPase superfamily. Arf family.

The protein localises to the golgi apparatus. Its function is as follows. GTP-binding protein involved in protein trafficking; may modulate vesicle budding and uncoating within the Golgi apparatus. May be involved in ciliogenesis. This is ADP-ribosylation factor 4 (arf4) from Xenopus laevis (African clawed frog).